The following is a 549-amino-acid chain: Glucose-6-phosphate isomerase (549 aa).

E355 acts as the Proton donor in catalysis. Active-site residues include H386 and K514.

Belongs to the GPI family.

Its subcellular location is the cytoplasm. The enzyme catalyses alpha-D-glucose 6-phosphate = beta-D-fructose 6-phosphate. It functions in the pathway carbohydrate biosynthesis; gluconeogenesis. Its pathway is carbohydrate degradation; glycolysis; D-glyceraldehyde 3-phosphate and glycerone phosphate from D-glucose: step 2/4. In terms of biological role, catalyzes the reversible isomerization of glucose-6-phosphate to fructose-6-phosphate. This Salmonella gallinarum (strain 287/91 / NCTC 13346) protein is Glucose-6-phosphate isomerase.